The following is a 388-amino-acid chain: Palmitoyltransferase ZDHHC18 (388 aa).

The tract at residues 1–67 is disordered; it reads MKDCEYQQIS…GSGSLGRRPR (67 aa). The Cytoplasmic portion of the chain corresponds to 1–90; that stretch reads MKDCEYQQIS…CGGRLMLAGH (90 aa). Over residues 10 to 27 the composition is skewed to low complexity; sequence SPGAAPLPASPGARRPGP. Phosphoserine is present on S19. Pro residues predominate over residues 28–46; sequence AASPTPGPGPAPPAAPAPP. The helical transmembrane segment at 91 to 111 threads the bilayer; that stretch reads GGVFALTLLLILTTTGLFFVF. Over 112-119 the chain is Lumenal; it reads DCPYLARK. Residues 120–140 form a helical membrane-spanning segment; it reads LTLAIPIIAAILFFFVMSCLL. Residues 141-235 are Cytoplasmic-facing; it reads QTSFTDPGIL…GNCVGRRNYR (95 aa). The DHHC domain maps to 192–242; that stretch reads KYCFTCKMFRPPRTSHCSVCDNCVERFDHHCPWVGNCVGRRNYRFFYAFIL. The S-palmitoyl cysteine intermediate role is filled by C222. The chain crosses the membrane as a helical span at residues 236–256; it reads FFYAFILSLSFLTAFIFACVV. Residues 257-277 lie on the Lumenal side of the membrane; the sequence is THLTLRAQGSNFLSTLKETPA. Residues 278–298 form a helical membrane-spanning segment; the sequence is SVLELVICFFSIWSILGLSGF. Topologically, residues 299–388 are cytoplasmic; sequence HTYLVASNLT…PDASMVGGHP (90 aa). The interval 364–388 is disordered; it reads LPSPIRSDEPACRAKPDASMVGGHP. Over residues 369 to 379 the composition is skewed to basic and acidic residues; sequence RSDEPACRAKP.

The protein belongs to the DHHC palmitoyltransferase family. ERF2/ZDHHC9 subfamily. As to expression, widely expressed.

The protein localises to the golgi apparatus membrane. It carries out the reaction L-cysteinyl-[protein] + hexadecanoyl-CoA = S-hexadecanoyl-L-cysteinyl-[protein] + CoA. Its function is as follows. Palmitoyltransferase that catalyzes the addition of palmitate onto various protein substrates, such as CGAS, HRAS and LCK. Acts as a negative regulator of the cGAS-STING pathway be mediating palmitoylation and inactivation of CGAS. May also have a palmitoyltransferase activity toward the beta-2 adrenergic receptor/ADRB2 and therefore regulate G protein-coupled receptor signaling. The chain is Palmitoyltransferase ZDHHC18 from Homo sapiens (Human).